The chain runs to 288 residues: ATP phosphoribosyltransferase (288 aa).

Belongs to the ATP phosphoribosyltransferase family. Long subfamily. It depends on Mg(2+) as a cofactor.

The protein localises to the cytoplasm. The enzyme catalyses 1-(5-phospho-beta-D-ribosyl)-ATP + diphosphate = 5-phospho-alpha-D-ribose 1-diphosphate + ATP. Its pathway is amino-acid biosynthesis; L-histidine biosynthesis; L-histidine from 5-phospho-alpha-D-ribose 1-diphosphate: step 1/9. Its activity is regulated as follows. Feedback inhibited by histidine. Functionally, catalyzes the condensation of ATP and 5-phosphoribose 1-diphosphate to form N'-(5'-phosphoribosyl)-ATP (PR-ATP). Has a crucial role in the pathway because the rate of histidine biosynthesis seems to be controlled primarily by regulation of HisG enzymatic activity. The chain is ATP phosphoribosyltransferase (hisG) from Methanocaldococcus jannaschii (strain ATCC 43067 / DSM 2661 / JAL-1 / JCM 10045 / NBRC 100440) (Methanococcus jannaschii).